A 458-amino-acid polypeptide reads, in one-letter code: Ig mu chain C region secreted form (458 aa).

The CH1 stretch occupies residues 1–106 (VSLSSPTLYP…SNRDLRVSFP (106 aa)). Residues Cys28 and Cys90 are joined by a disulfide bond. N-linked (GlcNAc...) asparagine glycosylation is found at Asn46 and Asn114. Residues 107-222 (VDSELPPNVS…VSMSSECSTT (116 aa)) are CH2. A disulfide bond links Cys137 and Cys200. Residues Asn212, Asn261, Asn277, and Asn284 are each glycosylated (N-linked (GlcNAc...) asparagine). Residues 223–327 (PSPGIQVFPI…PLKHTISKSR (105 aa)) form a CH3 region. 2 cysteine pairs are disulfide-bonded: Cys249/Cys308 and Cys356/Cys418. The tract at residues 328-458 (EVAKHPPAVY…IMSDTASTCY (131 aa)) is CH4. Residue Asn445 is glycosylated (N-linked (GlcNAc...) asparagine).

It localises to the secreted. The chain is Ig mu chain C region secreted form from Oryctolagus cuniculus (Rabbit).